The chain runs to 192 residues: Ion-translocating oxidoreductase complex subunit A (192 aa).

The next 6 helical transmembrane spans lie at 5–25 (LLLLIGTVLVNNFVLVKFLGL), 39–59 (IGMSMATTFVLTLASVLSFLV), 72–92 (LRTMSFILVIAVVVQFTEMLV), 102–122 (ALGIYLPLITTNCAVLGVALL), 134–154 (AIYGFGAAVGFSLVLILFSAM), and 171–191 (AIAMITAGLMSLAFMGFTGLV).

Belongs to the NqrDE/RnfAE family. The complex is composed of six subunits: RnfA, RnfB, RnfC, RnfD, RnfE and RnfG.

The protein localises to the cell inner membrane. Part of a membrane-bound complex that couples electron transfer with translocation of ions across the membrane. This chain is Ion-translocating oxidoreductase complex subunit A, found in Shewanella amazonensis (strain ATCC BAA-1098 / SB2B).